We begin with the raw amino-acid sequence, 254 residues long: Alcohol dehydrogenase (254 aa).

10 to 33 (FVAGLGGIGLDTSRELVKRNLKNL) contributes to the NAD(+) binding site. A substrate-binding site is contributed by serine 138. Tyrosine 151 acts as the Proton acceptor in catalysis.

This sequence belongs to the short-chain dehydrogenases/reductases (SDR) family. As to quaternary structure, homodimer.

The catalysed reaction is a primary alcohol + NAD(+) = an aldehyde + NADH + H(+). It carries out the reaction a secondary alcohol + NAD(+) = a ketone + NADH + H(+). This Drosophila persimilis (Fruit fly) protein is Alcohol dehydrogenase (Adh).